Here is a 325-residue protein sequence, read N- to C-terminus: Phosphate import ATP-binding protein PstB (325 aa).

Residues 79-320 (IDNYNLWYSN…PNNEKTKDYI (242 aa)) form the ABC transporter domain. 111–118 (GPSGCGKS) lines the ATP pocket.

It belongs to the ABC transporter superfamily. Phosphate importer (TC 3.A.1.7) family. In terms of assembly, the complex is composed of two ATP-binding proteins (PstB), two transmembrane proteins (PstC and PstA) and a solute-binding protein (PstS).

The protein localises to the cell membrane. It carries out the reaction phosphate(out) + ATP + H2O = ADP + 2 phosphate(in) + H(+). Its function is as follows. Part of the ABC transporter complex PstSACB involved in phosphate import. Responsible for energy coupling to the transport system. The protein is Phosphate import ATP-binding protein PstB of Mycoplasmoides gallisepticum (strain R(low / passage 15 / clone 2)) (Mycoplasma gallisepticum).